Consider the following 26-residue polypeptide: Mu-theraphotoxin-Phlo2a (26 aa).

3 disulfides stabilise this stretch: Cys2–Cys16, Cys9–Cys21, and Cys15–Cys25.

The protein belongs to the neurotoxin 30 (phrixotoxin) family. As to expression, expressed by the venom gland.

It is found in the secreted. Its function is as follows. Gating-modifier toxin that non-selectively inhibits voltage-gated sodium channel Nav by shifting the threshold for channel activation to more positive potentials. This toxin moderately inhibits human Nav1.2/SCN2A (IC(50)=404 nM), Nav1.5/SCN5A (IC(50)=218 nM) and Nav1.7/SCN9A (IC(50)=333 nM). Inhibition of Nav1.7 is voltage-dependent, with lower inhibition at more positive test pulses. This chain is Mu-theraphotoxin-Phlo2a, found in Phlogius sp. (Tarantula spider).